The primary structure comprises 677 residues: Vertnin (677 aa).

2 disordered regions span residues 356 to 376 (GSTG…SSPE) and 458 to 490 (HSGS…KLSP). A compositionally biased stretch (basic and acidic residues) spans 458–472 (HSGSSEEGSDADKSQ).

The protein belongs to the vertnin family.

The protein localises to the nucleus. Its function is as follows. Functions as a transcriptional repressor that modulates bmp2b expression during dorsoventral patterning. In Danio rerio (Zebrafish), this protein is Vertnin (vrtn).